A 517-amino-acid polypeptide reads, in one-letter code: GMP synthase [glutamine-hydrolyzing] (517 aa).

The 191-residue stretch at 9 to 199 (RILILDFGSQ…VLGVCGCERL (191 aa)) folds into the Glutamine amidotransferase type-1 domain. Cys-86 serves as the catalytic Nucleophile. Catalysis depends on residues His-173 and Glu-175. The region spanning 200–392 (WTSESIIEDA…LGLPYNMLYR (193 aa)) is the GMPS ATP-PPase domain. 227–233 (SGGVDSS) is a binding site for ATP.

In terms of assembly, homodimer.

It catalyses the reaction XMP + L-glutamine + ATP + H2O = GMP + L-glutamate + AMP + diphosphate + 2 H(+). It functions in the pathway purine metabolism; GMP biosynthesis; GMP from XMP (L-Gln route): step 1/1. Catalyzes the synthesis of GMP from XMP. The protein is GMP synthase [glutamine-hydrolyzing] of Vibrio parahaemolyticus serotype O3:K6 (strain RIMD 2210633).